A 424-amino-acid polypeptide reads, in one-letter code: MTNKKAFKEACKFIAGGVNSPVRAFANVQSEPKFISHGKGAYIFDIDGNSYIDYVQSWGPLLFGHCDKDIQKACQKALHKGSSFGAPTLLETELAKLVLSDFPHLEKIRFVSSGTEATMSAIRLARGFTKKDKILKFEGCYHGHSDSLLVSAGSGAATFNSPSSLGVLEDVAKHTLVAKYNDINSVKELFEKNKDIACVIIEPIAGNMGLVPAKQDFLEELAKICKNNQTLLIFDEVMSGYRASYLGSYGINHIQADIITFGKVIGGGLPAAAFASRAEIMDILSPLGGVYQAGTLSGNPLAMAAGIASLTKAKKKTKLYDKLGTLAKKLTQGMKKLADEKGLPLQACHVGSMFGYFFTKDPVSNYQDALKSNLALFSKFHKNMLENGIYLAPSQFETGFICSKMDDKVIDITLEAVRESFKRI.

Position 263 is an N6-(pyridoxal phosphate)lysine (Lys263).

The protein belongs to the class-III pyridoxal-phosphate-dependent aminotransferase family. HemL subfamily. Homodimer. Pyridoxal 5'-phosphate serves as cofactor.

Its subcellular location is the cytoplasm. The enzyme catalyses (S)-4-amino-5-oxopentanoate = 5-aminolevulinate. Its pathway is porphyrin-containing compound metabolism; protoporphyrin-IX biosynthesis; 5-aminolevulinate from L-glutamyl-tRNA(Glu): step 2/2. The protein is Glutamate-1-semialdehyde 2,1-aminomutase of Campylobacter jejuni subsp. doylei (strain ATCC BAA-1458 / RM4099 / 269.97).